The sequence spans 396 residues: Chalcone synthase (396 aa).

C169 is a catalytic residue.

This sequence belongs to the thiolase-like superfamily. Chalcone/stilbene synthases family.

It carries out the reaction (E)-4-coumaroyl-CoA + 3 malonyl-CoA + 3 H(+) = 2',4,4',6'-tetrahydroxychalcone + 3 CO2 + 4 CoA. Its pathway is secondary metabolite biosynthesis; flavonoid biosynthesis. In terms of biological role, the primary product of this enzyme is 4,2',4',6'-tetrahydroxychalcone (also termed naringenin-chalcone or chalcone) which can under specific conditions spontaneously isomerize into naringenin. The sequence is that of Chalcone synthase (CHS) from Pinus sylvestris (Scotch pine).